Here is a 628-residue protein sequence, read N- to C-terminus: 1-deoxy-D-xylulose-5-phosphate synthase (628 aa).

Thiamine diphosphate is bound by residues H80 and 121 to 123; that span reads GHS. D152 is a binding site for Mg(2+). Thiamine diphosphate-binding positions include 153–154, N181, Y289, and E370; that span reads GG. N181 provides a ligand contact to Mg(2+).

The protein belongs to the transketolase family. DXPS subfamily. In terms of assembly, homodimer. Mg(2+) serves as cofactor. Requires thiamine diphosphate as cofactor.

It carries out the reaction D-glyceraldehyde 3-phosphate + pyruvate + H(+) = 1-deoxy-D-xylulose 5-phosphate + CO2. Its pathway is metabolic intermediate biosynthesis; 1-deoxy-D-xylulose 5-phosphate biosynthesis; 1-deoxy-D-xylulose 5-phosphate from D-glyceraldehyde 3-phosphate and pyruvate: step 1/1. Catalyzes the acyloin condensation reaction between C atoms 2 and 3 of pyruvate and glyceraldehyde 3-phosphate to yield 1-deoxy-D-xylulose-5-phosphate (DXP). This Alkalilimnicola ehrlichii (strain ATCC BAA-1101 / DSM 17681 / MLHE-1) protein is 1-deoxy-D-xylulose-5-phosphate synthase.